Reading from the N-terminus, the 417-residue chain is Histidine--tRNA ligase (417 aa).

This sequence belongs to the class-II aminoacyl-tRNA synthetase family. In terms of assembly, homodimer.

Its subcellular location is the cytoplasm. It carries out the reaction tRNA(His) + L-histidine + ATP = L-histidyl-tRNA(His) + AMP + diphosphate + H(+). The chain is Histidine--tRNA ligase from Nitratidesulfovibrio vulgaris (strain ATCC 29579 / DSM 644 / CCUG 34227 / NCIMB 8303 / VKM B-1760 / Hildenborough) (Desulfovibrio vulgaris).